A 186-amino-acid chain; its full sequence is Transcriptional repressor NrdR (186 aa).

The segment at methionine 1–alanine 24 is disordered. A zinc finger spans residues cysteine 3–cysteine 34. The segment covering glutamine 12–alanine 24 has biased composition (basic and acidic residues). Residues leucine 49–aspartate 139 form the ATP-cone domain. A disordered region spans residues arginine 146–alanine 186.

This sequence belongs to the NrdR family. Requires Zn(2+) as cofactor.

Its function is as follows. Negatively regulates transcription of bacterial ribonucleotide reductase nrd genes and operons by binding to NrdR-boxes. The sequence is that of Transcriptional repressor NrdR from Methylobacterium sp. (strain 4-46).